The following is an 88-amino-acid chain: Sec-independent protein translocase protein TatA (88 aa).

The chain crosses the membrane as a helical span at residues 1–21 (MGGISIWQLLIIAVIVVLLFG). Residues 41–88 (KAMGDENQKETNNAEKTTNDADFDTKNLAQKTSTEEKSTTESKNKEQV) are disordered. 2 stretches are compositionally biased toward basic and acidic residues: residues 42–65 (AMGD…DFDT) and 73–88 (STEE…KEQV).

The protein belongs to the TatA/E family. In terms of assembly, the Tat system comprises two distinct complexes: a TatABC complex, containing multiple copies of TatA, TatB and TatC subunits, and a separate TatA complex, containing only TatA subunits. Substrates initially bind to the TatABC complex, which probably triggers association of the separate TatA complex to form the active translocon.

It localises to the cell inner membrane. In terms of biological role, part of the twin-arginine translocation (Tat) system that transports large folded proteins containing a characteristic twin-arginine motif in their signal peptide across membranes. TatA could form the protein-conducting channel of the Tat system. This Proteus mirabilis (strain HI4320) protein is Sec-independent protein translocase protein TatA.